A 96-amino-acid polypeptide reads, in one-letter code: GTPase HRas (96 aa).

Met-1 carries the N-acetylmethionine modification. Thr-2 is modified (N-acetylthreonine; in GTPase HRas, N-terminally processed). Gly-10–Ser-17 is a GTP binding site. The short motif at Tyr-32 to Tyr-40 is the Effector region element. Asp-57–Gln-61 provides a ligand contact to GTP.

It belongs to the small GTPase superfamily. Ras family. In terms of assembly, in its GTP-bound form interacts with PLCE1. Interacts with TBC1D10C. Interacts with RGL3. Interacts with HSPD1. Found in a complex with at least BRAF, HRAS, MAP2K1, MAPK3 and RGS14. Interacts (active GTP-bound form) with RGS14 (via RBD 1 domain). Forms a signaling complex with RASGRP1 and DGKZ. Interacts with RASSF5. Interacts with PDE6D. Interacts with IKZF3. Interacts with RACK1. Interacts with PIK3CG; the interaction is required for membrane recruitment and beta-gamma G protein dimer-dependent activation of the PI3K gamma complex PIK3CG:PIK3R6. Interacts with RAPGEF2. Interacts (active GTP-bound form) with both SHOC2 and PP1c (all isoforms) to form a tertiary complex; SHOC2 and PP1c preferably bind M-Ras/MRAS, but they also bind K-Ras/KRAS, N-Ras/NRAS and H-Ras/HRAS. Interacts (in GTP-bound form) with Oog1. Interacts (GTP-bound form) with MAPKAP1/SIN1; inhibiting H-Ras/HRAS activity. Ubiquitinated by the BCR(LZTR1) E3 ubiquitin ligase complex at Lys-170 in a non-degradative manner, leading to inhibit Ras signaling by decreasing Ras association with membranes.

The protein localises to the cell membrane. Its subcellular location is the golgi apparatus. It localises to the golgi apparatus membrane. The enzyme catalyses GTP + H2O = GDP + phosphate + H(+). Its activity is regulated as follows. Alternates between an inactive form bound to GDP and an active form bound to GTP. Activated by a guanine nucleotide-exchange factor (GEF) and inactivated by a GTPase-activating protein (GAP). Ras proteins bind GDP/GTP and possess intrinsic GTPase activity. The protein is GTPase HRas (HRAS) of Mesocricetus auratus (Golden hamster).